A 3093-amino-acid polypeptide reads, in one-letter code: Genome polyprotein (3093 aa).

The Peptidase S30 domain maps to 255–403 (KRLLRHVHQA…TTTGERIEYY (149 aa)). Active-site for P1 proteinase activity residues include His311, Asp323, and Ser355. The Peptidase C6 domain occupies 690–809 (HYVPKVGYCY…ASELKEYEIG (120 aa)). Active-site for helper component proteinase activity residues include Cys698 and His769. The 152-residue stretch at 1215 to 1366 (RVLADKDNEF…AQKSLDIMTL (152 aa)) folds into the Helicase ATP-binding domain. Position 1228–1235 (1228–1235 (GHVGCGKS)) interacts with ATP. The short motif at 1316 to 1319 (DEVH) is the DEVH box element. Residues 1367–1546 (PTMTPLDFVK…QVPPVLRNVN (180 aa)) form the Helicase C-terminal domain. A Nuclear localization signal motif is present at residues 1883–1895 (DKVRKKANVHAMQ). Tyr1915 is subject to O-(5'-phospho-RNA)-tyrosine. One can recognise a Peptidase C4 domain in the interval 2041–2257 (SKALYGGPRC…VDVGGLYIHN (217 aa)). Residues His2082, Asp2121, and Cys2193 each act as for nuclear inclusion protein A activity in the active site. The RdRp catalytic domain maps to 2516–2639 (EWFIDADGSQ…NANEEAKDVV (124 aa)). Residues 2800-2826 (NAAATSGATTPAQNVGAGTTTPAKATP) are compositionally biased toward low complexity. A disordered region spans residues 2800–2842 (NAAATSGATTPAQNVGAGTTTPAKATPQSGRRPSFGSLIDNPI).

The protein belongs to the potyviridae genome polyprotein family. Post-translationally, VPg is uridylylated by the polymerase and is covalently attached to the 5'-end of the genomic RNA. This uridylylated form acts as a nucleotide-peptide primer for the polymerase. Genome polyprotein of potyviruses undergoes post-translational proteolytic processing by the main proteinase NIa-pro resulting in the production of at least ten individual proteins. The P1 proteinase and the HC-pro cleave only their respective C-termini autocatalytically. 6K1 is essential for proper proteolytic separation of P3 from CI.

The protein localises to the host cytoplasmic vesicle. It is found in the virion. The catalysed reaction is RNA(n) + a ribonucleoside 5'-triphosphate = RNA(n+1) + diphosphate. It carries out the reaction Hydrolyzes glutaminyl bonds, and activity is further restricted by preferences for the amino acids in P6 - P1' that vary with the species of potyvirus, e.g. Glu-Xaa-Xaa-Tyr-Xaa-Gln-|-(Ser or Gly) for the enzyme from tobacco etch virus. The natural substrate is the viral polyprotein, but other proteins and oligopeptides containing the appropriate consensus sequence are also cleaved.. It catalyses the reaction Hydrolyzes a Gly-|-Gly bond at its own C-terminus, commonly in the sequence -Tyr-Xaa-Val-Gly-|-Gly, in the processing of the potyviral polyprotein.. In terms of biological role, required for aphid transmission and also has proteolytic activity. Only cleaves a Gly-Gly dipeptide at its own C-terminus. Interacts with virions and aphid stylets. Acts as a suppressor of RNA-mediated gene silencing, also known as post-transcriptional gene silencing (PTGS), a mechanism of plant viral defense that limits the accumulation of viral RNAs. May have RNA-binding activity. Its function is as follows. Has helicase activity. It may be involved in replication. Indispensable for virus replication. Reduces the abundance of host transcripts related to jasmonic acid biosynthesis therefore altering the host defenses. In order to increase its own stability, decreases host protein degradation pathways. Functionally, indispensable for virus replication. In terms of biological role, mediates the cap-independent, EIF4E-dependent translation of viral genomic RNAs. Binds to the cap-binding site of host EIF4E and thus interferes with the host EIF4E-dependent mRNA export and translation. VPg-RNA directly binds EIF4E and is a template for transcription. Also forms trimeric complexes with EIF4E-EIF4G, which are templates for translation. Its function is as follows. Has RNA-binding and proteolytic activities. An RNA-dependent RNA polymerase that plays an essential role in the virus replication. Functionally, involved in aphid transmission, cell-to-cell and systemis movement, encapsidation of the viral RNA and in the regulation of viral RNA amplification. In Brome streak virus (strain 11-Cal) (BStV), this protein is Genome polyprotein.